A 506-amino-acid chain; its full sequence is MEFSTKALDWAKAGPSGALAAKSDCLVIGLFESQTLAGAAKALDVATKGLVGRLVKLGDFEGKRGTSLLLHEVAGVGAARVLLVGLGKEAEFTDRAYAEAVRTALRALSGTKAANVTWTLTQQPARDKDAAWAVLTAVTLIREAGYRFIERHPELKSKRDKSGGGLRKVMLTVDAADAKAAAVAAARGAAIANGMELTRDLGNLPSNICTPTYLANTARQIAKDFKLKVEVLGRKQIEALKMGAFLAVTKGSQEPPQFIVLRYEGGPAKQAPVVLVGKGITFDTGGISLKPGEGMDEMKFDMCGAASVLGTLRAVAEMGLKLNVIAVVPTCENMPSGIATKPGDVVTSMSGQTIEILNTDAEGRLILCDALTYVERFRPAAVIDVATLTGAVIIALGHINTGVYARSDALANALLAAGKQSLDTGWRMPLDEEYQELLKSNFADMGNIGGRPAASVTAACFLARFTEKYDWAHLDIAGTAWKSGAAKGATGRPVPLLTRFLMDRAG.

Residues Lys278 and Asp283 each contribute to the Mn(2+) site. Residue Lys290 is part of the active site. Residues Asp301, Asp360, and Glu362 each contribute to the Mn(2+) site. Residue Arg364 is part of the active site.

This sequence belongs to the peptidase M17 family. It depends on Mn(2+) as a cofactor.

The protein resides in the cytoplasm. The catalysed reaction is Release of an N-terminal amino acid, Xaa-|-Yaa-, in which Xaa is preferably Leu, but may be other amino acids including Pro although not Arg or Lys, and Yaa may be Pro. Amino acid amides and methyl esters are also readily hydrolyzed, but rates on arylamides are exceedingly low.. It carries out the reaction Release of an N-terminal amino acid, preferentially leucine, but not glutamic or aspartic acids.. Presumably involved in the processing and regular turnover of intracellular proteins. Catalyzes the removal of unsubstituted N-terminal amino acids from various peptides. This is Probable cytosol aminopeptidase from Ralstonia nicotianae (strain ATCC BAA-1114 / GMI1000) (Ralstonia solanacearum).